We begin with the raw amino-acid sequence, 598 residues long: Elongation factor 4 (598 aa).

One can recognise a tr-type G domain in the interval 4–185 (KNIRNFSIIA…TIIAKIPPPK (182 aa)). GTP-binding positions include 16 to 21 (DHGKST) and 132 to 135 (NKID).

It belongs to the TRAFAC class translation factor GTPase superfamily. Classic translation factor GTPase family. LepA subfamily.

Its subcellular location is the cell membrane. It carries out the reaction GTP + H2O = GDP + phosphate + H(+). Required for accurate and efficient protein synthesis under certain stress conditions. May act as a fidelity factor of the translation reaction, by catalyzing a one-codon backward translocation of tRNAs on improperly translocated ribosomes. Back-translocation proceeds from a post-translocation (POST) complex to a pre-translocation (PRE) complex, thus giving elongation factor G a second chance to translocate the tRNAs correctly. Binds to ribosomes in a GTP-dependent manner. The polypeptide is Elongation factor 4 (Mycoplasma genitalium (strain ATCC 33530 / DSM 19775 / NCTC 10195 / G37) (Mycoplasmoides genitalium)).